Reading from the N-terminus, the 392-residue chain is Homeobox protein engrailed-1 (392 aa).

Disordered stretches follow at residues 1-100 (MEEQ…AQLH), 132-164 (ARGG…TRAP), 219-251 (KPSD…PAIL), and 282-306 (SDRP…DKRP). Over residues 14–36 (SALGAAAAATPGGLSLSLSPGAS) the composition is skewed to low complexity. Composition is skewed to pro residues over residues 51–66 (SPQP…PCLP) and 75–84 (PPHPPPPPPQ). Residues 85–100 (HLAAPAHQPQPAAQLH) show a composition bias toward low complexity. The segment covering 223–236 (TGGGGSGGGAGSPG) has biased composition (gly residues). Positions 303–362 (DKRPRTAFTAEQLQRLKAEFQANRYITEQRRQTLAQELSLNESQIKIWFQNKRAKIKKAT) form a DNA-binding region, homeobox.

This sequence belongs to the engrailed homeobox family.

Its subcellular location is the nucleus. Functionally, required for proper formation of the apical ectodermal ridge and correct dorsal-ventral patterning in the limb. This is Homeobox protein engrailed-1 (EN1) from Homo sapiens (Human).